The chain runs to 402 residues: Enoyl-[acyl-carrier-protein] reductase [NADH] (402 aa).

NAD(+) is bound by residues 48-53, 74-75, 111-112, and 140-141; these read GASSGY, FE, DA, and LA. Tyr-226 contacts substrate. Catalysis depends on Tyr-236, which acts as the Proton donor. Residues Lys-245 and 274-276 contribute to the NAD(+) site; that span reads VVT.

This sequence belongs to the TER reductase family. In terms of assembly, monomer.

It carries out the reaction a 2,3-saturated acyl-[ACP] + NAD(+) = a (2E)-enoyl-[ACP] + NADH + H(+). It catalyses the reaction a 2,3-saturated acyl-CoA + NAD(+) = a (2E)-enoyl-CoA + NADH + H(+). It participates in lipid metabolism; fatty acid biosynthesis. Its function is as follows. Involved in the final reduction of the elongation cycle of fatty acid synthesis (FAS II). Catalyzes the reduction of a carbon-carbon double bond in an enoyl moiety that is covalently linked to an acyl carrier protein (ACP). It can also use crotonyl-CoA. The polypeptide is Enoyl-[acyl-carrier-protein] reductase [NADH] (Xanthomonas oryzae pv. oryzae (strain MAFF 311018)).